The sequence spans 343 residues: Phosphoribosylformylglycinamidine cyclo-ligase (343 aa).

It belongs to the AIR synthase family.

The protein resides in the cytoplasm. It carries out the reaction 2-formamido-N(1)-(5-O-phospho-beta-D-ribosyl)acetamidine + ATP = 5-amino-1-(5-phospho-beta-D-ribosyl)imidazole + ADP + phosphate + H(+). It participates in purine metabolism; IMP biosynthesis via de novo pathway; 5-amino-1-(5-phospho-D-ribosyl)imidazole from N(2)-formyl-N(1)-(5-phospho-D-ribosyl)glycinamide: step 2/2. This Parasynechococcus marenigrum (strain WH8102) protein is Phosphoribosylformylglycinamidine cyclo-ligase.